The following is an 878-amino-acid chain: Phosphoenolpyruvate carboxylase (878 aa).

Residues His138 and Lys545 contribute to the active site.

This sequence belongs to the PEPCase type 1 family. It depends on Mg(2+) as a cofactor.

The enzyme catalyses oxaloacetate + phosphate = phosphoenolpyruvate + hydrogencarbonate. Forms oxaloacetate, a four-carbon dicarboxylic acid source for the tricarboxylic acid cycle. The protein is Phosphoenolpyruvate carboxylase of Shewanella sediminis (strain HAW-EB3).